The primary structure comprises 110 residues: Large ribosomal subunit protein uL22 (110 aa).

Belongs to the universal ribosomal protein uL22 family. Part of the 50S ribosomal subunit.

In terms of biological role, this protein binds specifically to 23S rRNA; its binding is stimulated by other ribosomal proteins, e.g. L4, L17, and L20. It is important during the early stages of 50S assembly. It makes multiple contacts with different domains of the 23S rRNA in the assembled 50S subunit and ribosome. Functionally, the globular domain of the protein is located near the polypeptide exit tunnel on the outside of the subunit, while an extended beta-hairpin is found that lines the wall of the exit tunnel in the center of the 70S ribosome. This is Large ribosomal subunit protein uL22 from Syntrophobacter fumaroxidans (strain DSM 10017 / MPOB).